A 537-amino-acid polypeptide reads, in one-letter code: Cytochrome bd ubiquinol oxidase subunit 1 (537 aa).

Residues 1-24 lie on the Cytoplasmic side of the membrane; it reads MISESVVDLSRLQFAMTALYHFLF. His21 provides a ligand contact to heme b. Residues 25–44 traverse the membrane as a helical segment; sequence VPLTLGMTFLLAIMESVYVM. The Periplasmic segment spans residues 45 to 96; it reads TGKQVYKDMVKFWGKLFGINFALGVTTGITMEFQFGTNWAYYSHYVGDIFGA. Residues 97-116 form a helical membrane-spanning segment; that stretch reads PLAIEGLTAFFLESTFIGMF. At 117 to 131 the chain is on the cytoplasmic side; sequence FFGWDRLSKIQHLAV. The helical transmembrane segment at 132 to 151 threads the bilayer; that stretch reads TWLVALGSNLSALWILVANG. Residues 152-189 lie on the Periplasmic side of the membrane; it reads WMQHPVGAEFNFETMRMELVDFGALLLNPVAQVKFVHT. Heme b is bound at residue His188. A helical transmembrane segment spans residues 190 to 209; the sequence is VASGYVTGAVFVLAISSYYL. At 210-221 the chain is on the cytoplasmic side; that stretch reads LKKRDLGFARRS. Residues 222-241 traverse the membrane as a helical segment; sequence FAIASAFGMASILSVIVLGD. Topologically, residues 242–394 are periplasmic; sequence ESGYEVGEVQ…VASMFWSFRA (153 aa). Met395 serves as a coordination point for heme b. The chain crosses the membrane as a helical span at residues 395-414; that stretch reads MVGAGFAMLILFVCAFWASA. Residues 415–472 lie on the Cytoplasmic side of the membrane; the sequence is RKNEESKPWLLKFALYSLPLPWIATQTGWFVAEHGRQPWTIGGVLPTHLSASSLSTGD. The helical transmembrane segment at 473–492 threads the bilayer; it reads LWGSLIALIAFYTLLLVVEM. Residues 493–537 are Periplasmic-facing; it reads YLMIRFARLGPSSLHTGRYHFEQLEQHAVKHASPSQADPQQPVNA.

The protein belongs to the cytochrome ubiquinol oxidase subunit 1 family. Heterodimer of subunits I and II. Heme b serves as cofactor. Heme d cis-diol is required as a cofactor.

It is found in the cell inner membrane. It catalyses the reaction 2 a ubiquinol + O2(in) + 4 H(+)(in) = 2 a ubiquinone + 2 H2O(in) + 4 H(+)(out). In terms of biological role, may be involved in maintaining the low intracellular oxygen concentration required for nitrogen fixation. This Azotobacter vinelandii protein is Cytochrome bd ubiquinol oxidase subunit 1 (cydA).